The primary structure comprises 123 residues: RHEVPQANLECDEGAMDLKISTGNMVALYQILSASKDSDCPAGGAVTWTDQVVAGLRICMGCPVELDLESEELKVPVAVSISKRRPPGWSPLRAAVTSFNEKEFSPPAPPSRAEYSLYFDMRK.

In terms of processing, bradykinin is released from kininogen by kallikrein. Post-translationally, N-glycosylated. Contains sulfated N-acetylglucosamine and O-acetylated sialic acids as terminal elements on biantennary and triantennary N-glycans.

Inhibits papain and ficin (cysteine proteinases) but not trypsin (a serine proteinase). This is Kininogen from Gadus morhua (Atlantic cod).